A 426-amino-acid chain; its full sequence is Gamma-glutamyl phosphate reductase (426 aa).

This sequence belongs to the gamma-glutamyl phosphate reductase family.

It localises to the cytoplasm. The catalysed reaction is L-glutamate 5-semialdehyde + phosphate + NADP(+) = L-glutamyl 5-phosphate + NADPH + H(+). It participates in amino-acid biosynthesis; L-proline biosynthesis; L-glutamate 5-semialdehyde from L-glutamate: step 2/2. Its function is as follows. Catalyzes the NADPH-dependent reduction of L-glutamate 5-phosphate into L-glutamate 5-semialdehyde and phosphate. The product spontaneously undergoes cyclization to form 1-pyrroline-5-carboxylate. The sequence is that of Gamma-glutamyl phosphate reductase from Nitrobacter winogradskyi (strain ATCC 25391 / DSM 10237 / CIP 104748 / NCIMB 11846 / Nb-255).